The chain runs to 251 residues: Probable transcriptional regulatory protein Blon_1155/BLIJ_1182 (251 aa).

The protein belongs to the TACO1 family.

It is found in the cytoplasm. The sequence is that of Probable transcriptional regulatory protein Blon_1155/BLIJ_1182 from Bifidobacterium longum subsp. infantis (strain ATCC 15697 / DSM 20088 / JCM 1222 / NCTC 11817 / S12).